Consider the following 266-residue polypeptide: Indole-3-glycerol phosphate synthase (266 aa).

Belongs to the TrpC family.

The enzyme catalyses 1-(2-carboxyphenylamino)-1-deoxy-D-ribulose 5-phosphate + H(+) = (1S,2R)-1-C-(indol-3-yl)glycerol 3-phosphate + CO2 + H2O. The protein operates within amino-acid biosynthesis; L-tryptophan biosynthesis; L-tryptophan from chorismate: step 4/5. The polypeptide is Indole-3-glycerol phosphate synthase (Variovorax paradoxus (strain S110)).